A 96-amino-acid chain; its full sequence is Small ribosomal subunit protein bS6 (96 aa).

Belongs to the bacterial ribosomal protein bS6 family.

Functionally, binds together with bS18 to 16S ribosomal RNA. The sequence is that of Small ribosomal subunit protein bS6 from Salinispora tropica (strain ATCC BAA-916 / DSM 44818 / JCM 13857 / NBRC 105044 / CNB-440).